We begin with the raw amino-acid sequence, 822 residues long: AP-1 complex subunit gamma-1 (822 aa).

Positions 597–628 are disordered; the sequence is EIVQTNGETEPAPLETKPPPSGPQPTSQANDL. The 116-residue stretch at 702-817 folds into the GAE domain; sequence AGIPSITAYS…QDLAEVNNFP (116 aa).

It belongs to the adaptor complexes large subunit family. In terms of assembly, adaptor protein complex 1 (AP-1) is a heterotetramer composed of two large adaptins (gamma-type subunit AP1G1 and beta-type subunit AP1B1), a medium adaptin (mu-type subunit AP1M1 or AP1M2) and a small adaptin (sigma-type subunit AP1S1 or AP1S2 or AP1S3). Interacts (via GAE domain) with RABEP1. Interacts with SYNRG/gamma-synergin. Interacts with EPS15. Interacts (via GAE domain) with AP1AR (via coiled-coil domain). Interacts with CLN3 (via dileucine motif); this interaction facilitates lysosomal targeting. Interacts (via GAE domain) with AFTPH/aftiphilin; the interaction is required to recruit AFTPH/aftiphilin to the perinuclear region of the cell. In terms of tissue distribution, widely expressed.

The protein resides in the golgi apparatus. The protein localises to the cytoplasmic vesicle. It localises to the clathrin-coated vesicle membrane. It is found in the cytoplasm. Its subcellular location is the perinuclear region. The protein resides in the clathrin-coated vesicle. The protein localises to the membrane. It localises to the clathrin-coated pit. Its function is as follows. Subunit of clathrin-associated adaptor protein complex 1 that plays a role in protein sorting in the late-Golgi/trans-Golgi network (TGN) and/or endosomes. The AP complexes mediate both the recruitment of clathrin to membranes and the recognition of sorting signals within the cytosolic tails of transmembrane cargo molecules. In association with AFTPH/aftiphilin in the aftiphilin/p200/gamma-synergin complex, involved in the trafficking of transferrin from early to recycling endosomes, and the membrane trafficking of furin and the lysosomal enzyme cathepsin D between the trans-Golgi network (TGN) and endosomes. The sequence is that of AP-1 complex subunit gamma-1 (AP1G1) from Homo sapiens (Human).